The primary structure comprises 873 residues: Leucine--tRNA ligase (873 aa).

A 'HIGH' region motif is present at residues 41 to 51; sequence PYPSGRIHMGH. Residues 645 to 649 carry the 'KMSKS' region motif; it reads KMSKS. Lys-648 is an ATP binding site.

The protein belongs to the class-I aminoacyl-tRNA synthetase family.

The protein resides in the cytoplasm. It catalyses the reaction tRNA(Leu) + L-leucine + ATP = L-leucyl-tRNA(Leu) + AMP + diphosphate. In Cereibacter sphaeroides (strain ATCC 17025 / ATH 2.4.3) (Rhodobacter sphaeroides), this protein is Leucine--tRNA ligase.